The chain runs to 566 residues: Bacillolysin (566 aa).

Residues Met-1–Ala-27 form the signal peptide. The propeptide at Asp-28–Pro-249 is activation peptide. Positions 307, 309, 311, and 388 each coordinate Ca(2+). His-392 contacts Zn(2+). The active site involves Glu-393. 2 residues coordinate Zn(2+): His-396 and Glu-416. Glu-427, Asn-433, Asp-435, Glu-437, Glu-440, Tyr-443, Thr-444, Lys-447, and Asp-450 together coordinate Ca(2+). His-481 serves as the catalytic Proton donor.

Belongs to the peptidase M4 family. Requires Ca(2+) as cofactor. The cofactor is Zn(2+).

It localises to the secreted. The enzyme catalyses Similar, but not identical, to that of thermolysin.. Extracellular zinc metalloprotease. In Bacillus cereus, this protein is Bacillolysin (npr).